Here is a 1026-residue protein sequence, read N- to C-terminus: Multidrug resistance protein MdtC (1026 aa).

A run of 11 helical transmembrane segments spans residues 15–35 (ILIAAAITLCGILGFRLLPVA), 333–353 (EVEETLAISVALVILVVFLFL), 360–380 (LIPAVAVPVSLIGTFAAMYLC), 387–407 (LSLMALTIATGFVVDDAIVVL), 431–451 (VGFTVISMSLSLVAVFLPLLL), 463–483 (FAVTLSVAIGISLVVSLTLTP), 528–548 (LVGVVFLGTVALNIWLYIAIP), 853–873 (LILIVAAIATVYIVLEILYES), 897–917 (LFNAPFSLIALIGIMLLIGIV), 953–973 (PIMMTTLAALFGALPLVLSGG), and 984–1004 (ITIVGGLVMSQLLTLYTTPVV).

Belongs to the resistance-nodulation-cell division (RND) (TC 2.A.6) family. MdtC subfamily. Part of a tripartite efflux system composed of MdtA, MdtB and MdtC. MdtC forms a heteromultimer with MdtB.

The protein resides in the cell inner membrane. In Salmonella paratyphi A (strain AKU_12601), this protein is Multidrug resistance protein MdtC.